The primary structure comprises 199 residues: Holliday junction branch migration complex subunit RuvA (199 aa).

A domain I region spans residues 1–63; that stretch reads MIGKLNGKID…EEHIHLYGFL (63 aa). Residues 64 to 141 are domain II; sequence TLEEKNFFNL…TKIFSSSAII (78 aa). Positions 141-145 are flexible linker; the sequence is IKDSN. Residues 146–199 are domain III; it reads ISSIAINEVMKALVNLGFTRFEAQNTVQGIITQNPKISIDELIKTALKNRNSSF.

It belongs to the RuvA family. As to quaternary structure, homotetramer. Forms an RuvA(8)-RuvB(12)-Holliday junction (HJ) complex. HJ DNA is sandwiched between 2 RuvA tetramers; dsDNA enters through RuvA and exits via RuvB. An RuvB hexamer assembles on each DNA strand where it exits the tetramer. Each RuvB hexamer is contacted by two RuvA subunits (via domain III) on 2 adjacent RuvB subunits; this complex drives branch migration. In the full resolvosome a probable DNA-RuvA(4)-RuvB(12)-RuvC(2) complex forms which resolves the HJ.

The protein localises to the cytoplasm. The RuvA-RuvB-RuvC complex processes Holliday junction (HJ) DNA during genetic recombination and DNA repair, while the RuvA-RuvB complex plays an important role in the rescue of blocked DNA replication forks via replication fork reversal (RFR). RuvA specifically binds to HJ cruciform DNA, conferring on it an open structure. The RuvB hexamer acts as an ATP-dependent pump, pulling dsDNA into and through the RuvAB complex. HJ branch migration allows RuvC to scan DNA until it finds its consensus sequence, where it cleaves and resolves the cruciform DNA. The sequence is that of Holliday junction branch migration complex subunit RuvA from Rickettsia prowazekii (strain Madrid E).